Consider the following 602-residue polypeptide: Elongation factor 4 (602 aa).

In terms of domain architecture, tr-type G spans 8-189 (KNIRNFSIIA…KIITTIPAPS (182 aa)). GTP contacts are provided by residues 20-25 (DHGKST) and 136-139 (NKID).

Belongs to the TRAFAC class translation factor GTPase superfamily. Classic translation factor GTPase family. LepA subfamily.

The protein localises to the cell inner membrane. The enzyme catalyses GTP + H2O = GDP + phosphate + H(+). Its function is as follows. Required for accurate and efficient protein synthesis under certain stress conditions. May act as a fidelity factor of the translation reaction, by catalyzing a one-codon backward translocation of tRNAs on improperly translocated ribosomes. Back-translocation proceeds from a post-translocation (POST) complex to a pre-translocation (PRE) complex, thus giving elongation factor G a second chance to translocate the tRNAs correctly. Binds to ribosomes in a GTP-dependent manner. This chain is Elongation factor 4, found in Helicobacter pylori (strain G27).